The chain runs to 155 residues: Cytochrome c oxidase subunit 4, mitochondrial (155 aa).

A mitochondrion-targeting transit peptide spans 1–25 (MLSLRQSIRFFKPATRTLCSSRYLL). The residue at position 55 (threonine 55) is a Phosphothreonine. Zn(2+) contacts are provided by cysteine 111, histidine 119, cysteine 134, and cysteine 137.

It belongs to the cytochrome c oxidase subunit 5B family. As to quaternary structure, component of the cytochrome c oxidase (complex IV, CIV), a multisubunit enzyme composed of 12 subunits. The complex is composed of a catalytic core of 3 subunits COX1, COX2 and COX3, encoded in the mitochondrial DNA, and 9 supernumerary subunits COX4, COX5A (or COX5B), COX6, COX7, COX8, COX9, COX12, COX13 and COX26, which are encoded in the nuclear genome. The complex exists as a monomer or a dimer and forms supercomplexes (SCs) in the inner mitochondrial membrane with a dimer of ubiquinol-cytochrome c oxidoreductase (cytochrome b-c1 complex, complex III, CIII), resulting in 2 different assemblies (supercomplexes III(2)IV and III(2)IV(2)).

It localises to the mitochondrion inner membrane. It functions in the pathway energy metabolism; oxidative phosphorylation. In terms of biological role, component of the cytochrome c oxidase, the last enzyme in the mitochondrial electron transport chain which drives oxidative phosphorylation. The respiratory chain contains 3 multisubunit complexes succinate dehydrogenase (complex II, CII), ubiquinol-cytochrome c oxidoreductase (cytochrome b-c1 complex, complex III, CIII) and cytochrome c oxidase (complex IV, CIV), that cooperate to transfer electrons derived from NADH and succinate to molecular oxygen, creating an electrochemical gradient over the inner membrane that drives transmembrane transport and the ATP synthase. Cytochrome c oxidase is the component of the respiratory chain that catalyzes the reduction of oxygen to water. Electrons originating from reduced cytochrome c in the intermembrane space (IMS) are transferred via the dinuclear copper A center (CU(A)) of COX2 and heme A of COX1 to the active site in COX1, a binuclear center (BNC) formed by heme A3 and copper B (CU(B)). The BNC reduces molecular oxygen to 2 water molecules using 4 electrons from cytochrome c in the IMS and 4 protons from the mitochondrial matrix. The chain is Cytochrome c oxidase subunit 4, mitochondrial (COX4) from Saccharomyces cerevisiae (strain ATCC 204508 / S288c) (Baker's yeast).